Here is a 1004-residue protein sequence, read N- to C-terminus: Ovochymase-2 (1004 aa).

An N-terminal signal peptide occupies residues 1 to 19 (MPTRNLLLGSILLSLAVKG). The propeptide at 20-45 (DPGPHRGARCGVSPLGSATELNYLSR) is activation peptide. In terms of domain architecture, Peptidase S1 1 spans 46–295 (IVGGRESKKG…LLGWVSSQLN (250 aa)). Cys-71 and Cys-87 are joined by a disulfide. His-86 serves as the catalytic Charge relay system. A Ca(2+)-binding site is contributed by Glu-113. Asn-128 carries an N-linked (GlcNAc...) asparagine glycan. Catalysis depends on Asp-136, which acts as the Charge relay system. Intrachain disulfides connect Cys-170-Cys-240, Cys-201-Cys-219, and Cys-230-Cys-259. Ser-234 serves as the catalytic Charge relay system. CUB domains are found at residues 309–419 (QDGV…YSAV) and 429–541 (CGSF…FTFV). Asn-351 carries an N-linked (GlcNAc...) asparagine glycan. A disulfide bond links Cys-363 and Cys-382. N-linked (GlcNAc...) asparagine glycosylation occurs at Asn-408. 2 disulfides stabilise this stretch: Cys-429/Cys-456 and Cys-483/Cys-504. Polar residues predominate over residues 547-558 (VEDSRQGNMPST). The interval 547-566 (VEDSRQGNMPSTNKKETTAQ) is disordered. In terms of domain architecture, Peptidase S1 2 spans 580-820 (IYNSIAKVEE…FIDWIRQIMS (241 aa)). The propeptide at 584 to 1004 (IAKVEEAVPH…VVPDSDSSEP (421 aa)) is activation peptide. Disulfide bonds link Cys-609-Cys-625, Cys-706-Cys-776, Cys-737-Cys-754, and Cys-766-Cys-796. N-linked (GlcNAc...) asparagine glycosylation is present at Asn-763. N-linked (GlcNAc...) asparagine glycosylation occurs at Asn-940.

The protein belongs to the peptidase S1 family. Post-translationally, the catalytically inactive 110 kDa form is processed both N- and C-terminally to give rise to the 66 kDa catalytically active form. Specifically expressed in the pars recta oviduct.

It localises to the secreted. The enzyme catalyses Preferential cleavage at 371-Gly-Ser-Arg-|-Trp-374 of glycoprotein gp43 in Xenopus laevis coelemic egg envelope to yield gp41.. Functionally, converts the glycoprotein envelope surrounding the egg from an unfertilizable to a fertilizable form during its transit through the pars recta portion of the oviduct by selectively hydrolyzing the envelope glycoprotein gp43. The egg envelope is converted to a sperm-penetrable form, via an increase in sperm binding. This is Ovochymase-2 (ovch2) from Xenopus laevis (African clawed frog).